Here is a 431-residue protein sequence, read N- to C-terminus: Serine hydroxymethyltransferase (431 aa).

Residues Leu128 and 132-134 (GHL) contribute to the (6S)-5,6,7,8-tetrahydrofolate site. Residue Lys237 is modified to N6-(pyridoxal phosphate)lysine.

The protein belongs to the SHMT family. As to quaternary structure, homodimer. Pyridoxal 5'-phosphate serves as cofactor.

It is found in the cytoplasm. It carries out the reaction (6R)-5,10-methylene-5,6,7,8-tetrahydrofolate + glycine + H2O = (6S)-5,6,7,8-tetrahydrofolate + L-serine. It functions in the pathway one-carbon metabolism; tetrahydrofolate interconversion. The protein operates within amino-acid biosynthesis; glycine biosynthesis; glycine from L-serine: step 1/1. Functionally, catalyzes the reversible interconversion of serine and glycine with tetrahydrofolate (THF) serving as the one-carbon carrier. This reaction serves as the major source of one-carbon groups required for the biosynthesis of purines, thymidylate, methionine, and other important biomolecules. Also exhibits THF-independent aldolase activity toward beta-hydroxyamino acids, producing glycine and aldehydes, via a retro-aldol mechanism. The protein is Serine hydroxymethyltransferase of Ruegeria pomeroyi (strain ATCC 700808 / DSM 15171 / DSS-3) (Silicibacter pomeroyi).